A 101-amino-acid chain; its full sequence is Ubiquitin-related modifier 1 homolog (101 aa).

Glycine 101 carries the 1-thioglycine modification. Residue glycine 101 forms a Glycyl lysine isopeptide (Gly-Lys) (interchain with K-? in acceptor proteins) linkage.

It belongs to the URM1 family. In terms of assembly, interacts with cer. In terms of processing, C-terminal thiocarboxylation occurs in 2 steps, it is first acyl-adenylated (-COAMP) via the hesA/moeB/thiF part of the MOCS3 homolog, then thiocarboxylated (-COSH) via the rhodanese domain of the MOCS3 homolog.

The protein resides in the cytoplasm. The protein operates within tRNA modification; 5-methoxycarbonylmethyl-2-thiouridine-tRNA biosynthesis. Functionally, acts as a sulfur carrier required for 2-thiolation of mcm(5)S(2)U at tRNA wobble positions of cytosolic tRNA(Lys), tRNA(Glu) and tRNA(Gln). Serves as sulfur donor in tRNA 2-thiolation reaction by being thiocarboxylated (-COSH) at its C-terminus by MOCS3. The sulfur is then transferred to tRNA to form 2-thiolation of mcm(5)S(2)U. Also acts as a ubiquitin-like protein (UBL) that is covalently conjugated via an isopeptide bond to lysine residues of target proteins such as Prx2/Jafrac1, Ciao1, Eip71CD and GILT1. The thiocarboxylated form serves as substrate for conjugation and oxidative stress specifically induces the formation of UBL-protein conjugates. In Drosophila simulans (Fruit fly), this protein is Ubiquitin-related modifier 1 homolog.